The following is a 447-amino-acid chain: Transducin beta-like protein 2 (447 aa).

The interval 38 to 72 (RSGRPACQKANGFPPDKSSGSKKQKQYQRIRKEKP) is disordered. Positions 57-69 (GSKKQKQYQRIRK) are enriched in basic residues. WD repeat units lie at residues 88–127 (SHSGNISCMDFSSNGKYLATCADDRTIRIWSTKDFLQREH), 134–174 (VELD…DGGY), 186–226 (KHKA…STIN), 228–267 (NQMNNTHAAVSPCGRFVASCGFTPDVKVWEVCFGKKGEFQ), 277–316 (GHSAAVHSFAFSNDSRRMASVSKDGTWKLWDTDVEYKKKQ), 329–367 (AAGAAPCRLALSPNAQVLALASGSSIHLYNTRRGEKEEC), and 371–409 (VHGECIANLSFDITGRFLASCGDRAVRLFHNTPGHRAMV). Lys-168 is covalently cross-linked (Glycyl lysine isopeptide (Lys-Gly) (interchain with G-Cter in SUMO2)). Residue Thr-433 is modified to Phosphothreonine; by ATM or ATR.

In Homo sapiens (Human), this protein is Transducin beta-like protein 2 (TBL2).